Reading from the N-terminus, the 176-residue chain is Centromere protein R (176 aa).

Residue Lys-8 forms a Glycyl lysine isopeptide (Lys-Gly) (interchain with G-Cter in SUMO2) linkage. Position 17 is a phosphoserine (Ser-17). The tract at residues 20–50 (PSKIMRKKSITAFSPTTGTYQLSPFSSPRTP) is DD1. Lys-22 is covalently cross-linked (Glycyl lysine isopeptide (Lys-Gly) (interchain with G-Cter in SUMO2)). Phosphoserine is present on Ser-28. The segment covering 34 to 48 (PTTGTYQLSPFSSPR) has biased composition (polar residues). Residues 34–80 (PTTGTYQLSPFSSPRTPKEQEHRDGPSNGTRKWSVLSSPARQDSTVK) are disordered. A compositionally biased stretch (basic and acidic residues) spans 49–58 (TPKEQEHRDG). A compositionally biased stretch (polar residues) spans 60-80 (SNGTRKWSVLSSPARQDSTVK). The Nuclear localization signal motif lies at 63–66 (TRKW). Ser-71 bears the Phosphoserine mark. The stretch at 82-112 (SDGFMMLLSKIERSSEKTMEIMKNLSSLQAL) forms a coiled coil. The LXXLL motif motif lies at 118–122 (LEDLL). The short motif at 171–175 (LKAIL) is the LXXIL motif element.

As to quaternary structure, homodimer; mediated by the coiled coil domain. Interacts with CCNA2 and MTA1. Interacts with NFKB1 NF-kappa-B subunit. Component of the CENPA-CAD complex, composed of CENPI, CENPK, CENPL, CENPO, CENPP, CENPQ, CENPR and CENPS. The CENPA-CAD complex interacts with the CENPA-NAC complex, at least composed of CENPA, CENPC, CENPH, CENPM, CENPN, CENPT and CENPU. Interacts with TASOR.

It is found in the nucleus. The protein resides in the chromosome. It localises to the centromere. The protein localises to the kinetochore. Transcription coregulator that can have both coactivator and corepressor functions. Involved in the coactivation of nuclear receptors for retinoid X (RXRs) and thyroid hormone (TRs) in a ligand-dependent fashion. In contrast, it does not coactivate nuclear receptors for retinoic acid, vitamin D, progesterone receptor, nor glucocorticoid. Acts as a coactivator for estrogen receptor alpha. Acts as a transcriptional corepressor via its interaction with the NFKB1 NF-kappa-B subunit, possibly by interfering with the transactivation domain of NFKB1. Induces apoptosis in breast cancer cells, but not in other cancer cells, via a caspase-2 mediated pathway that involves mitochondrial membrane permeabilization but does not require other caspases. May also act as an inhibitor of cyclin A-associated kinase. Also acts a component of the CENPA-CAD (nucleosome distal) complex, a complex recruited to centromeres which is involved in assembly of kinetochore proteins, mitotic progression and chromosome segregation. May be involved in incorporation of newly synthesized CENPA into centromeres via its interaction with the CENPA-NAC complex. The chain is Centromere protein R (Itgb3bp) from Rattus norvegicus (Rat).